A 149-amino-acid polypeptide reads, in one-letter code: Macrodomain Ter protein (149 aa).

It belongs to the MatP family. In terms of assembly, homodimer.

Its subcellular location is the cytoplasm. Functionally, required for spatial organization of the terminus region of the chromosome (Ter macrodomain) during the cell cycle. Prevents early segregation of duplicated Ter macrodomains during cell division. Binds specifically to matS, which is a 13 bp signature motif repeated within the Ter macrodomain. This is Macrodomain Ter protein from Vibrio vulnificus (strain CMCP6).